The following is a 238-amino-acid chain: Endothelin-3 (238 aa).

The first 16 residues, Met1–Ala16, serve as a signal peptide directing secretion. Positions Ala17–Ser94 are excised as a propeptide. The segment at Gln24 to Pro89 is disordered. Intrachain disulfides connect Cys97–Cys111 and Cys99–Cys107. The propeptide occupies Ile118–Pro238. An endothelin-like region spans residues Cys159–Cys173. The disordered stretch occupies residues Ser183 to Ser219. Residues Thr185–His212 show a composition bias toward basic and acidic residues.

It belongs to the endothelin/sarafotoxin family. In terms of tissue distribution, expressed in trophoblasts and placental stem villi vessels, but not in cultured placental smooth muscle cells.

The protein resides in the secreted. Its function is as follows. Endothelins are endothelium-derived vasoconstrictor peptides. This Homo sapiens (Human) protein is Endothelin-3 (EDN3).